Reading from the N-terminus, the 115-residue chain is NADH-ubiquinone oxidoreductase chain 3 (115 aa).

Transmembrane regions (helical) follow at residues 4–24 (ALTLFTNTALASLLVLIAFWL), 55–75 (FFLVAITFLLFDLEIALLLPL), and 84–104 (LTTMLTMALLLISLLAASLAY).

Belongs to the complex I subunit 3 family. As to quaternary structure, core subunit of respiratory chain NADH dehydrogenase (Complex I) which is composed of 45 different subunits. Interacts with TMEM186. Interacts with TMEM242.

It localises to the mitochondrion inner membrane. It catalyses the reaction a ubiquinone + NADH + 5 H(+)(in) = a ubiquinol + NAD(+) + 4 H(+)(out). Its function is as follows. Core subunit of the mitochondrial membrane respiratory chain NADH dehydrogenase (Complex I) which catalyzes electron transfer from NADH through the respiratory chain, using ubiquinone as an electron acceptor. Essential for the catalytic activity of complex I. This is NADH-ubiquinone oxidoreductase chain 3 from Halichoerus grypus (Gray seal).